The primary structure comprises 129 residues: Glycine cleavage system H protein (129 aa).

The region spanning 24 to 106 (SYTVGISEHA…YGDGWFFRIM (83 aa)) is the Lipoyl-binding domain. Lys-65 carries the N6-lipoyllysine modification.

The protein belongs to the GcvH family. The glycine cleavage system is composed of four proteins: P, T, L and H. The cofactor is (R)-lipoate.

In terms of biological role, the glycine cleavage system catalyzes the degradation of glycine. The H protein shuttles the methylamine group of glycine from the P protein to the T protein. The polypeptide is Glycine cleavage system H protein (Shewanella loihica (strain ATCC BAA-1088 / PV-4)).